The chain runs to 522 residues: N-acetylgalactosamine-6-sulfatase (522 aa).

A signal peptide spans 1 to 26; sequence MAAVVAATRWWQLLLVLSAAGMGASG. Residues 27 to 379 form a catalytic domain region; the sequence is APQPPNILLL…PTLLQGRLMD (353 aa). Residues aspartate 39, aspartate 40, and cysteine 79 each contribute to the Ca(2+) site. Residue cysteine 79 is the Nucleophile of the active site. A 3-oxoalanine (Cys) modification is found at cysteine 79. The active site involves histidine 142. An N-linked (GlcNAc...) asparagine glycan is attached at asparagine 204. Ca(2+) contacts are provided by aspartate 288 and asparagine 289. A disulfide bond links cysteine 308 and cysteine 419. Asparagine 423 carries N-linked (GlcNAc...) asparagine glycosylation. Cystine bridges form between cysteine 489-cysteine 518 and cysteine 501-cysteine 507.

The protein belongs to the sulfatase family. As to quaternary structure, homodimer. It depends on Ca(2+) as a cofactor. The conversion to 3-oxoalanine (also known as C-formylglycine, FGly), of a serine or cysteine residue in prokaryotes and of a cysteine residue in eukaryotes, is critical for catalytic activity.

It is found in the lysosome. The catalysed reaction is Hydrolysis of the 6-sulfate groups of the N-acetyl-D-galactosamine 6-sulfate units of chondroitin sulfate and of the D-galactose 6-sulfate units of keratan sulfate.. The polypeptide is N-acetylgalactosamine-6-sulfatase (GALNS) (Homo sapiens (Human)).